The sequence spans 807 residues: Mechanosensitive cation channel TMEM63A (807 aa).

The Extracellular portion of the chain corresponds to 1 to 51; the sequence is MTDSPFLELWQSRAVSVREQLGLGDRPNDSYCYNSAKNSTVLQGVTFGGIP. A glycan (N-linked (GlcNAc...) asparagine) is linked at asparagine 38. A helical transmembrane segment spans residues 52–74; it reads TVLLIDVSCFLFLILVFSIIRRR. The Cytoplasmic segment spans residues 75 to 134; the sequence is FWDYGRIALVSEADSEPRFQRLSSTSSSGQQDFENELGCCPWLTAIFRLHDDQILEWCGE. The helical transmembrane segment at 135-167 threads the bilayer; sequence DAIHYLSFQRHIIFLLVVVSFLSLCVILPVNLS. The Extracellular segment spans residues 168-191; the sequence is GDLLDKDPYSFGRTTIANLQTDND. A helical transmembrane segment spans residues 192–217; it reads LLWLHTIFAVIYLFLTVGFMRHHTQS. At 218 to 416 the chain is on the cytoplasmic side; the sequence is IKYKEENLVR…CWKNLSIQGL (199 aa). The segment at 219–414 is intracellular linker IL2; confers mechanosensitivity; the sequence is KYKEENLVRR…DICWKNLSIQ (196 aa). Residues 417–444 form a helical membrane-spanning segment; the sequence is RWWLQWLGINFTLFLGLFFLTTPSIILS. The Extracellular segment spans residues 445–462; that stretch reads TMDKFNVTKPIHALNNPI. Asparagine 450 carries an N-linked (GlcNAc...) asparagine glycan. A helical membrane pass occupies residues 463–490; it reads ISQFFPTLLLWSFSALLPSIVYYSTLLE. The Cytoplasmic segment spans residues 491–495; sequence SHWTK. Residues 496–532 form a helical membrane-spanning segment; the sequence is SGENQIMMTKVYIFLIFMVLILPSLGLTSLDFFFRWL. Topologically, residues 533–554 are extracellular; the sequence is FDKTSSEASIRLECVFLPDQGA. The helical transmembrane segment at 555–586 threads the bilayer; that stretch reads FFVNYVIASAFIGNGMELLRLPGLILYTFRMI. A gating helix region spans residues 555 to 586; sequence FFVNYVIASAFIGNGMELLRLPGLILYTFRMI. The Cytoplasmic portion of the chain corresponds to 587 to 606; that stretch reads MAKTAADRRNVKQNQAFQYE. A helical transmembrane segment spans residues 607–624; that stretch reads FGAMYAWMLCVFTVIMAY. Topologically, residues 625 to 628 are extracellular; the sequence is SITC. The chain crosses the membrane as a helical span at residues 629–651; the sequence is PIIAPFGLIYILLKHMVDRHNLY. At 652-661 the chain is on the cytoplasmic side; that stretch reads FIYLPAKLEK. A helical transmembrane segment spans residues 662–689; it reads GIHFAAVNQALAAPILCLFWLYFFSFLR. Over 690 to 694 the chain is Extracellular; the sequence is LGMKA. Residues 695–709 form a helical membrane-spanning segment; that stretch reads PATLFTFLVVLLTIL. The Cytoplasmic segment spans residues 710 to 807; the sequence is VCLAHTCFGY…GSVAAAPQEA (98 aa). Phosphoserine is present on serine 739.

The protein belongs to the CSC1 (TC 1.A.17) family. Monomer. In terms of processing, N-Glycosylated.

It is found in the lysosome membrane. The protein localises to the early endosome membrane. Its subcellular location is the cell membrane. It catalyses the reaction Ca(2+)(in) = Ca(2+)(out). Mechanosensitive cation channel with low conductance and high activation threshold. In contrast to TMEM63B, does not show phospholipid scramblase activity. Acts as a regulator of lysosomal morphology by mediating lysosomal mechanosensitivity. Important for the baby's first breath and respiration throughout life. Upon lung inflation conducts cation currents in alveolar type 1 and 2 cells triggering lamellar body exocytosis and surfactant secretion into airspace. Also acts as an osmosensitive cation channel preferentially activated by hypotonic stress. This chain is Mechanosensitive cation channel TMEM63A (TMEM63A), found in Pongo abelii (Sumatran orangutan).